The chain runs to 197 residues: Pyridoxal 5'-phosphate synthase subunit PdxT (197 aa).

Position 53-55 (53-55 (GES)) interacts with L-glutamine. Residue C85 is the Nucleophile of the active site. L-glutamine is bound by residues R114 and 142-143 (IR). Active-site charge relay system residues include H179 and E181.

The protein belongs to the glutaminase PdxT/SNO family. In the presence of PdxS, forms a dodecamer of heterodimers. Only shows activity in the heterodimer.

The enzyme catalyses aldehydo-D-ribose 5-phosphate + D-glyceraldehyde 3-phosphate + L-glutamine = pyridoxal 5'-phosphate + L-glutamate + phosphate + 3 H2O + H(+). The catalysed reaction is L-glutamine + H2O = L-glutamate + NH4(+). Its pathway is cofactor biosynthesis; pyridoxal 5'-phosphate biosynthesis. In terms of biological role, catalyzes the hydrolysis of glutamine to glutamate and ammonia as part of the biosynthesis of pyridoxal 5'-phosphate. The resulting ammonia molecule is channeled to the active site of PdxS. The polypeptide is Pyridoxal 5'-phosphate synthase subunit PdxT (Pyrococcus furiosus (strain ATCC 43587 / DSM 3638 / JCM 8422 / Vc1)).